A 148-amino-acid polypeptide reads, in one-letter code: Snaclec B3/B5 (148 aa).

Residues 1 to 24 form the signal peptide; the sequence is MGRFIFVSFGLLVVFLSLSGTGAA. 3 disulfide bridges follow: Cys-27–Cys-38, Cys-55–Cys-144, and Cys-121–Cys-136. The 112-residue stretch at 34-145 folds into the C-type lectin domain; it reads YDQHCYKVFD…CRLLGHFVCK (112 aa).

It belongs to the snaclec family. As to quaternary structure, heterodimer; disulfide-linked. In terms of tissue distribution, expressed by the venom gland.

The protein localises to the secreted. In terms of biological role, interferes with one step of hemostasis (modulation of platelet aggregation, or coagulation cascade, for example). This Macrovipera lebetinus (Levantine viper) protein is Snaclec B3/B5.